A 92-amino-acid chain; its full sequence is QLFDQVVKGFPTWLKLDKKENPVQFKIQVWHAEHRIGFPWSEIRNISFNDKKFVIKPIDKKAPDFVFYAPRRKPDTIEVQQMKLQDFEQKTK.

Residues 1-72 (QLFDQVVKGF…PDFVFYAPRR (72 aa)) form the FERM domain. Lys-15 is modified (N6-acetyllysine). The interaction with SCYL3 stretch occupies residues 42 to 92 (EIRNISFNDKKFVIKPIDKKAPDFVFYAPRRKPDTIEVQQMKLQDFEQKTK).

As to quaternary structure, interacts with PALS1 and NHERF2. Found in a complex with EZR, PODXL and NHERF2. Interacts with MCC, PLEKHG6, PODXL, SCYL3/PACE1, NHERF1 and TMEM8B. Interacts (when phosphorylated) with FES/FPS. Interacts with dimeric S100P, the interaction may be activating through unmasking of F-actin binding sites. Identified in complexes that contain VIM, EZR, AHNAK, BFSP1, BFSP2, ANK2, PLEC, PRX and spectrin. Detected in a complex composed of at least EZR, AHNAK, PPL and PRX. Interacts with PDPN (via cytoplasmic domain); activates RHOA and promotes epithelial-mesenchymal transition. Interacts with SPN/CD43 cytoplasmic tail, CD44 and ICAM2. Interacts with CLIC5; may work together in a complex which also includes RDX and MYO6 to stabilize linkages between the plasma membrane and subjacent actin cytoskeleton at the base of stereocilia. Phosphorylated by tyrosine-protein kinases. Phosphorylation by ROCK2 suppresses the head-to-tail association of the N-terminal and C-terminal halves resulting in an opened conformation which is capable of actin and membrane-binding. Post-translationally, S-nitrosylation is induced by interferon-gamma and oxidatively-modified low-densitity lipoprotein (LDL(ox)) possibly implicating the iNOS-S100A8/9 transnitrosylase complex.

The protein localises to the apical cell membrane. It localises to the cell projection. It is found in the microvillus membrane. The protein resides in the ruffle membrane. Its subcellular location is the cytoplasm. The protein localises to the cell cortex. It localises to the cytoskeleton. It is found in the microvillus. A head-to-tail association, of the N-terminal and C-terminal halves results in a closed conformation (inactive form) which is incapable of actin or membrane-binding. Its function is as follows. Probably involved in connections of major cytoskeletal structures to the plasma membrane. In epithelial cells, required for the formation of microvilli and membrane ruffles on the apical pole. Along with PLEKHG6, required for normal macropinocytosis. The polypeptide is Ezrin (Mesocricetus auratus (Golden hamster)).